We begin with the raw amino-acid sequence, 96 residues long: Small ribosomal subunit protein bS6 (96 aa).

It belongs to the bacterial ribosomal protein bS6 family.

In terms of biological role, binds together with bS18 to 16S ribosomal RNA. The polypeptide is Small ribosomal subunit protein bS6 (Mycolicibacterium paratuberculosis (strain ATCC BAA-968 / K-10) (Mycobacterium paratuberculosis)).